The chain runs to 311 residues: Acetyl-coenzyme A carboxylase carboxyl transferase subunit alpha (311 aa).

The CoA carboxyltransferase C-terminal domain maps to glutamate 32–glutamine 289.

The protein belongs to the AccA family. In terms of assembly, acetyl-CoA carboxylase is a heterohexamer composed of biotin carboxyl carrier protein (AccB), biotin carboxylase (AccC) and two subunits each of ACCase subunit alpha (AccA) and ACCase subunit beta (AccD).

The protein localises to the cytoplasm. It carries out the reaction N(6)-carboxybiotinyl-L-lysyl-[protein] + acetyl-CoA = N(6)-biotinyl-L-lysyl-[protein] + malonyl-CoA. Its pathway is lipid metabolism; malonyl-CoA biosynthesis; malonyl-CoA from acetyl-CoA: step 1/1. Functionally, component of the acetyl coenzyme A carboxylase (ACC) complex. First, biotin carboxylase catalyzes the carboxylation of biotin on its carrier protein (BCCP) and then the CO(2) group is transferred by the carboxyltransferase to acetyl-CoA to form malonyl-CoA. The chain is Acetyl-coenzyme A carboxylase carboxyl transferase subunit alpha from Exiguobacterium sibiricum (strain DSM 17290 / CCUG 55495 / CIP 109462 / JCM 13490 / 255-15).